Consider the following 315-residue polypeptide: MKRVVIALGGNAILQRGQKGTYEEQMENVRRTAKQIADIILDGDYEVVITHGNGPQVGALLLHMDAGQQVYGIPAQPMDVAGAMTQGQIGYMIGQALINELRKRGVEKPVATIVTQTIVDKNDPAFQNPSKPVGPFYDEETAKKLAKEKGWTVIEDAGRGWRRVVPSPDPKGHVEAPVIVDLVEKGFIVIASGGGGVPVIEENGELKGVEAVIDKDLAGEKLAEEVKADIFMILTDVNGAAINYGKPDEKWLGKVTVDELKRYYKEGHFKKGSMGPKVLAAIRFVEWGGERAVIASLDRAVEALEGKTGTQVVRE.

This sequence belongs to the carbamate kinase family. As to quaternary structure, homodimer.

It localises to the cytoplasm. It carries out the reaction hydrogencarbonate + NH4(+) + ATP = carbamoyl phosphate + ADP + H2O + H(+). This chain is Carbamate kinase (cpkA), found in Thermococcus kodakarensis (strain ATCC BAA-918 / JCM 12380 / KOD1) (Pyrococcus kodakaraensis (strain KOD1)).